A 345-amino-acid chain; its full sequence is Anthranilate phosphoribosyltransferase (345 aa).

5-phospho-alpha-D-ribose 1-diphosphate is bound by residues G84, 87-88, T92, 94-97, 112-120, and S124; these read GD, NIST, and KHGNRSVSS. G84 serves as a coordination point for anthranilate. Mg(2+) is bound at residue S96. N115 provides a ligand contact to anthranilate. R170 lines the anthranilate pocket. Residues D229 and E230 each contribute to the Mg(2+) site.

This sequence belongs to the anthranilate phosphoribosyltransferase family. In terms of assembly, homodimer. Mg(2+) serves as cofactor.

It carries out the reaction N-(5-phospho-beta-D-ribosyl)anthranilate + diphosphate = 5-phospho-alpha-D-ribose 1-diphosphate + anthranilate. The protein operates within amino-acid biosynthesis; L-tryptophan biosynthesis; L-tryptophan from chorismate: step 2/5. In terms of biological role, catalyzes the transfer of the phosphoribosyl group of 5-phosphorylribose-1-pyrophosphate (PRPP) to anthranilate to yield N-(5'-phosphoribosyl)-anthranilate (PRA). This is Anthranilate phosphoribosyltransferase from Xanthomonas campestris pv. campestris (strain 8004).